Here is an 86-residue protein sequence, read N- to C-terminus: UPF0367 protein NATL1_01981 (86 aa).

It belongs to the UPF0367 family.

In Prochlorococcus marinus (strain NATL1A), this protein is UPF0367 protein NATL1_01981.